The following is a 201-amino-acid chain: CASP-like protein 2D1 (201 aa).

Over 1–26 (MRSGEGSTAAAAAAEEEKVKVAAPFR) the chain is Cytoplasmic. Residues 27 to 47 (LAELGLRVCAVPLAVASVWEM) form a helical membrane-spanning segment. At 48–70 (ATNKQVDETYGEVRFSDLSGFRY) the chain is on the extracellular side. Residues 71–91 (LVWINAITAAYSVASILLSSC) traverse the membrane as a helical segment. Over 92-98 (RFITRFD) the chain is Cytoplasmic. A helical membrane pass occupies residues 99–119 (WLIFILDQASAYLLLTSASAA). Over 120–148 (AEVVYLAREGDREVSWGEVCSYFGRFCGA) the chain is Extracellular. A helical membrane pass occupies residues 149 to 169 (ATVSVALNAAALLCFMALSLI). Topologically, residues 170 to 201 (SAFRVFTKFNPPSQSNSKQQLSQEQGKPVVSG) are cytoplasmic. Residues 180–194 (PPSQSNSKQQLSQEQ) show a composition bias toward polar residues. The disordered stretch occupies residues 180-201 (PPSQSNSKQQLSQEQGKPVVSG).

It belongs to the Casparian strip membrane proteins (CASP) family. As to quaternary structure, homodimer and heterodimers.

Its subcellular location is the cell membrane. This Oryza sativa subsp. indica (Rice) protein is CASP-like protein 2D1.